An 86-amino-acid polypeptide reads, in one-letter code: Small ribosomal subunit protein bS16 (86 aa).

This sequence belongs to the bacterial ribosomal protein bS16 family.

The protein is Small ribosomal subunit protein bS16 of Trichormus variabilis (strain ATCC 29413 / PCC 7937) (Anabaena variabilis).